Consider the following 544-residue polypeptide: Secreted aspartic protease 9 (544 aa).

Positions 1–17 (MRLNSVALLSLVATALA) are cleaved as a signal peptide. The segment at 31 to 50 (GESKDDLSPEDDSNPRFVKR) is disordered. Residues 65-479 (YMATLKIGSN…DLDDYEVSLA (415 aa)) enclose the Peptidase A1 domain. Residue Asp83 is part of the active site. 83–85 (DTG) contacts pepstatin A. Cys98 and Cys195 are disulfide-bonded. 3 N-linked (GlcNAc...) asparagine glycosylation sites follow: Asn212, Asn240, and Asn252. Asp371 is a catalytic residue. 371-375 (DTGST) serves as a coordination point for pepstatin A. A disulfide bridge connects residues Cys406 and Cys441. 2 N-linked (GlcNAc...) asparagine glycosylation sites follow: Asn422 and Asn499. The tract at residues 500-519 (SSGSGTTSSSGTSTSTSTRH) is disordered. The GPI-anchor amidated serine moiety is linked to residue Ser520. Positions 521–544 (AGSIISKPVYGLLLSLLISCYVLV) are cleaved as a propeptide — removed in mature form. The chain crosses the membrane as a helical span at residues 524–544 (IISKPVYGLLLSLLISCYVLV).

The protein belongs to the peptidase A1 family. As to quaternary structure, monomer. In terms of processing, the GPI-anchor is attached to the protein in the endoplasmic reticulum and serves to target the protein to the cell surface. There, the glucosamine-inositol phospholipid moiety is cleaved off and the GPI-modified mannoprotein is covalently attached via its lipidless GPI glycan remnant to the 1,6-beta-glucan of the outer cell wall layer.

It localises to the cell membrane. The protein localises to the secreted. It is found in the cell wall. The enzyme catalyses Preferential cleavage at the carboxyl of hydrophobic amino acids, but fails to cleave 15-Leu-|-Tyr-16, 16-Tyr-|-Leu-17 and 24-Phe-|-Phe-25 of insulin B chain. Activates trypsinogen, and degrades keratin.. Its function is as follows. Secreted aspartic peptidases (SAPs) are a group of ten acidic hydrolases considered as key virulence factors. These enzymes supply the fungus with nutrient amino acids as well as are able to degrade the selected host's proteins involved in the immune defense. Moreover, acts toward human hemoglobin though limited proteolysis to generate a variety of antimicrobial hemocidins, enabling to compete with the other microorganisms of the same physiological niche using the microbicidal peptides generated from the host protein. Plays a key role in defense against host by cleaving histatin-5 (Hst 5), a peptide from human saliva that carries out fungicidal activity. The cleavage rate decreases in an order of SAP2 &gt; SAP9 &gt; SAP3 &gt; SAP7 &gt; SAP4 &gt; SAP1 &gt; SAP8. The first cleavage occurs between residues 'Lys-17' and 'His-18' of Hst 5, giving DSHAKRHHGYKRKFHEK and HHSHRGY peptides. Simultaneously, the DSHAKRHHGYKRK peptide is also formed. Further fragmentation by SAP9 results in FHEK product. This chain is Secreted aspartic protease 9, found in Candida albicans (strain SC5314 / ATCC MYA-2876) (Yeast).